Consider the following 561-residue polypeptide: Carboxylesterase 4A (561 aa).

The N-terminal stretch at 1 to 20 (MRWILCWSLTLCLMAQTALG) is a signal peptide. The cysteines at positions 88 and 116 are disulfide-linked. The N-linked (GlcNAc...) asparagine glycan is linked to asparagine 214. The active-site Acyl-ester intermediate is serine 221. A disulfide bond links cysteine 273 and cysteine 284. Asparagine 276 is a glycosylation site (N-linked (GlcNAc...) asparagine). The active-site Charge relay system is the glutamate 353. N-linked (GlcNAc...) asparagine glycosylation is present at asparagine 388. The active-site Charge relay system is histidine 467.

The protein belongs to the type-B carboxylesterase/lipase family.

It is found in the secreted. In terms of biological role, probable carboxylesterase. The protein is Carboxylesterase 4A (CES4A) of Homo sapiens (Human).